We begin with the raw amino-acid sequence, 159 residues long: Transcriptional repressor NrdR (159 aa).

Positions 1-21 are disordered; it reads MRCPKCQHNKSNVIDSRQAED. The segment at 3-34 is a zinc-finger region; it reads CPKCQHNKSNVIDSRQAEDGNTIRRRRECDAC. One can recognise an ATP-cone domain in the interval 49–139; the sequence is LLVVKKDGTR…VYRSFKDVDE (91 aa).

This sequence belongs to the NrdR family. It depends on Zn(2+) as a cofactor.

Its function is as follows. Negatively regulates transcription of bacterial ribonucleotide reductase nrd genes and operons by binding to NrdR-boxes. This Streptococcus thermophilus (strain CNRZ 1066) protein is Transcriptional repressor NrdR.